A 392-amino-acid chain; its full sequence is NADH-quinone oxidoreductase subunit D 1 (392 aa).

It belongs to the complex I 49 kDa subunit family. As to quaternary structure, NDH-1 is composed of 14 different subunits. Subunits NuoB, C, D, E, F, and G constitute the peripheral sector of the complex.

It localises to the cell inner membrane. It carries out the reaction a quinone + NADH + 5 H(+)(in) = a quinol + NAD(+) + 4 H(+)(out). Its function is as follows. NDH-1 shuttles electrons from NADH, via FMN and iron-sulfur (Fe-S) centers, to quinones in the respiratory chain. The immediate electron acceptor for the enzyme in this species is believed to be a menaquinone. Couples the redox reaction to proton translocation (for every two electrons transferred, four hydrogen ions are translocated across the cytoplasmic membrane), and thus conserves the redox energy in a proton gradient. In Cytophaga hutchinsonii (strain ATCC 33406 / DSM 1761 / CIP 103989 / NBRC 15051 / NCIMB 9469 / D465), this protein is NADH-quinone oxidoreductase subunit D 1.